The chain runs to 319 residues: MEPILAPNPNRFVIFPIQYYDIWNMYKKAEASFWTVEEVDISKDINDWNKLTPDEKYFIKHVLAFFAASDGIVNENLAERFCTEVQITEARCFYGFQMAIENIHSEMYSLLIDTYVKDSNEKNYLFNAIETMPCVKKKADWAQKWIHDSAGYGERLIAFAAVEGIFFSGSFASIFWLKKRGLMPGLTFSNELISRDEGLHCDFACLMFKHLLHPPSEETVRSIITDAVSIEQEFLTAALPVKLIGMNCEMMKTYIEFVADRLISELGFKKIYNVTNPFDFMENISLEGKTNFFEKRVGEYQKMGVMSQEDNHFSLDVDF.

Residues D70, E101, and H104 each contribute to the Fe cation site. The active site involves Y108. Fe cation contacts are provided by E163, E197, and H200. The segment at 313–319 is interaction with R1; sequence FSLDVDF.

This sequence belongs to the ribonucleoside diphosphate reductase small chain family. In terms of assembly, interacts with RNR1/OPG080 subunit. Can interact with host RNR1 supunit. Fe cation is required as a cofactor.

It catalyses the reaction a 2'-deoxyribonucleoside 5'-diphosphate + [thioredoxin]-disulfide + H2O = a ribonucleoside 5'-diphosphate + [thioredoxin]-dithiol. Functionally, ribonucleoside-diphosphate reductase holoenzyme provides the precursors necessary for viral DNA synthesis. Allows virus growth in non-dividing cells. Catalyzes the biosynthesis of deoxyribonucleotides from the corresponding ribonucleotides. This is Ribonucleoside-diphosphate reductase small chain (OPG048) from Bos taurus (Bovine).